A 77-amino-acid chain; its full sequence is Major pilus subunit operon regulatory protein (77 aa).

The protein to E.coli AfaF and DaaF.

Functionally, plays a role in the inhibition of methylation at the GATC1028 site located in the regulatory region upstream of the pabA promoter. May, in conjunction with the Mbf (methylation blocking factor), inhibits deoxyadenosine methylase from methylating the GATC1028 site. This Escherichia coli protein is Major pilus subunit operon regulatory protein (papI).